Reading from the N-terminus, the 185-residue chain is DNA-directed RNA polymerase 22 kDa subunit (185 aa).

This sequence belongs to the poxviridae DNA-directed RNA polymerase 22 kDa subunit family. In terms of assembly, the DNA-dependent RNA polymerase used for intermediate and late genes expression consists of eight subunits Rpo30/OPG66, Rpo7/OPG90, Rpo22/OPG103, Rpo147/OPG105, Rpo18/OPG119, Rpo19/OPG131, Rpo132/OPG151 and Rpo35/OPG156. The same holoenzyme, with the addition of the transcription-specificity factor OPG109, is used for early gene expression.

The protein resides in the virion. The enzyme catalyses RNA(n) + a ribonucleoside 5'-triphosphate = RNA(n+1) + diphosphate. Its function is as follows. Part of the DNA-dependent RNA polymerase which catalyzes the transcription of viral DNA into RNA using the four ribonucleoside triphosphates as substrates. Responsible for the transcription of early, intermediate and late genes. DNA-dependent RNA polymerase associates with the early transcription factor (ETF), itself composed of OPG118 and OPG133, thereby allowing the early genes transcription. Late transcription, and probably also intermediate transcription, require newly synthesized RNA polymerase. The polypeptide is DNA-directed RNA polymerase 22 kDa subunit (OPG103) (Variola virus (isolate Human/India/Ind3/1967) (VARV)).